A 978-amino-acid polypeptide reads, in one-letter code: Exocyst complex component 5 (978 aa).

Over residues 1 to 11 the composition is skewed to polar residues; the sequence is MSWARNIQSRI. Disordered regions lie at residues 1-87 and 122-246; these read MSWA…TTTQ and TSPS…TTPY. 2 stretches are compositionally biased toward low complexity: residues 36 to 52 and 62 to 86; these read PSSPTLSALSSPITSLT and SQPTTNTTSLTSTSPPSPTISTTTT. The span at 122 to 142 shows a compositional bias: polar residues; it reads TSPSMASPIGTSTGIQNPNAK. A compositionally biased stretch (low complexity) spans 143 to 245; it reads PSSLPSPSQS…QPTPIKQTTP (103 aa). A coiled-coil region spans residues 303–325; that stretch reads NTQLQLSQLESNIDRRLDDLAEE.

The protein belongs to the SEC10 family. In terms of assembly, the exocyst complex is composed of sec3/exoc1, sec5/exoc2, sec6/exoc3, sec8/exoc4, sec10/exoc5, sec15/exoc6, exo70/exoc7 and exo84/exoc8.

Component of the exocyst complex involved in the docking of exocytic vesicles with fusion sites on the plasma membrane. In Dictyostelium discoideum (Social amoeba), this protein is Exocyst complex component 5 (exoc5).